Here is a 293-residue protein sequence, read N- to C-terminus: Homoserine kinase (293 aa).

83-93 (PITRGMGSSSA) contacts ATP.

It belongs to the GHMP kinase family. Homoserine kinase subfamily.

Its subcellular location is the cytoplasm. It carries out the reaction L-homoserine + ATP = O-phospho-L-homoserine + ADP + H(+). The protein operates within amino-acid biosynthesis; L-threonine biosynthesis; L-threonine from L-aspartate: step 4/5. Its function is as follows. Catalyzes the ATP-dependent phosphorylation of L-homoserine to L-homoserine phosphate. In Helicobacter pylori (strain ATCC 700392 / 26695) (Campylobacter pylori), this protein is Homoserine kinase.